The primary structure comprises 473 residues: Aspartyl/glutamyl-tRNA(Asn/Gln) amidotransferase subunit B (473 aa).

The protein belongs to the GatB/GatE family. GatB subfamily. In terms of assembly, heterotrimer of A, B and C subunits.

The enzyme catalyses L-glutamyl-tRNA(Gln) + L-glutamine + ATP + H2O = L-glutaminyl-tRNA(Gln) + L-glutamate + ADP + phosphate + H(+). It catalyses the reaction L-aspartyl-tRNA(Asn) + L-glutamine + ATP + H2O = L-asparaginyl-tRNA(Asn) + L-glutamate + ADP + phosphate + 2 H(+). Its function is as follows. Allows the formation of correctly charged Asn-tRNA(Asn) or Gln-tRNA(Gln) through the transamidation of misacylated Asp-tRNA(Asn) or Glu-tRNA(Gln) in organisms which lack either or both of asparaginyl-tRNA or glutaminyl-tRNA synthetases. The reaction takes place in the presence of glutamine and ATP through an activated phospho-Asp-tRNA(Asn) or phospho-Glu-tRNA(Gln). The sequence is that of Aspartyl/glutamyl-tRNA(Asn/Gln) amidotransferase subunit B from Finegoldia magna (strain ATCC 29328 / DSM 20472 / WAL 2508) (Peptostreptococcus magnus).